Here is a 337-residue protein sequence, read N- to C-terminus: MDSFKPYLAKVATGAALTREEARTAFDHLLSGEVTHAQAGAFLMALRVRGEAQDEIVGAAGALRERMVRVVAPAGAIDIVGTGGDHSGSYNVSTLASILTAACGVPVAKHGNRAASSRSGAADVLAALGVRLGLDPEGLARCLEEAGLCFMFAQAHHASMRHVAPVRVELGTRTLFNLLGPLCNPAGVAGQLLGVYAGSLAEPLTRVLADLGSRRVWTVHGSDGLDEITTTGPTAVVALEDGAIRHFTIDPREVGLALASPEDLRGADPEHNAAALRAVLDGARTPYRDIAVLNAGAALVVAGACAGLGEGVARAAQAIETGAARAVLARLVAVSNA.

5-phospho-alpha-D-ribose 1-diphosphate contacts are provided by residues G81, 84–85, S89, 91–94, 109–117, and A121; these read GD, NVST, and KHGNRAASS. G81 contributes to the anthranilate binding site. S93 provides a ligand contact to Mg(2+). An anthranilate-binding site is contributed by N112. R167 is an anthranilate binding site. Mg(2+)-binding residues include D226 and E227.

This sequence belongs to the anthranilate phosphoribosyltransferase family. As to quaternary structure, homodimer. Mg(2+) serves as cofactor.

The catalysed reaction is N-(5-phospho-beta-D-ribosyl)anthranilate + diphosphate = 5-phospho-alpha-D-ribose 1-diphosphate + anthranilate. It participates in amino-acid biosynthesis; L-tryptophan biosynthesis; L-tryptophan from chorismate: step 2/5. Functionally, catalyzes the transfer of the phosphoribosyl group of 5-phosphorylribose-1-pyrophosphate (PRPP) to anthranilate to yield N-(5'-phosphoribosyl)-anthranilate (PRA). This is Anthranilate phosphoribosyltransferase from Methylobacterium sp. (strain 4-46).